Here is a 413-residue protein sequence, read N- to C-terminus: Transposon Ty4-H Gag polyprotein (413 aa).

Residues 39 to 115 (RKVSIKDEQV…IQLLETNENN (77 aa)) adopt a coiled-coil conformation. Residues 380–413 (RQQQLKSSAKRTKVLEQDTKKVKQSVQQQKTGNY) are disordered. A compositionally biased stretch (low complexity) spans 403-413 (QSVQQQKTGNY).

Functionally, capsid protein (CA) is the structural component of the virus-like particle (VLP), forming the shell that encapsulates the retrotransposons dimeric RNA genome. In Saccharomyces cerevisiae (strain ATCC 204508 / S288c) (Baker's yeast), this protein is Transposon Ty4-H Gag polyprotein (TY4A-H).